Reading from the N-terminus, the 258-residue chain is Small ribosomal subunit protein mS23 (258 aa).

Over residues 230-239 (KKNSTKQSWA) the composition is skewed to polar residues. The segment at 230–258 (KKNSTKQSWAEATEEKEEQDSAEPEELKL) is disordered. Residues 241-258 (ATEEKEEQDSAEPEELKL) show a composition bias toward acidic residues.

This sequence belongs to the mitochondrion-specific ribosomal protein mS23 family. As to quaternary structure, component of the mitochondrial small ribosomal subunit.

It is found in the mitochondrion. This Eremothecium gossypii (strain ATCC 10895 / CBS 109.51 / FGSC 9923 / NRRL Y-1056) (Yeast) protein is Small ribosomal subunit protein mS23 (RSM25).